The primary structure comprises 211 residues: Ion-translocating oxidoreductase complex subunit G (211 aa).

A helical transmembrane segment spans residues 9 to 29 (GLTLAIFACATTGLVALTQYL). Thr-175 is modified (FMN phosphoryl threonine).

The protein belongs to the RnfG family. As to quaternary structure, the complex is composed of six subunits: RnfA, RnfB, RnfC, RnfD, RnfE and RnfG. FMN serves as cofactor.

It is found in the cell inner membrane. Functionally, part of a membrane-bound complex that couples electron transfer with translocation of ions across the membrane. This is Ion-translocating oxidoreductase complex subunit G from Vibrio parahaemolyticus serotype O3:K6 (strain RIMD 2210633).